A 507-amino-acid chain; its full sequence is Mandelamide hydrolase (507 aa).

Residues Lys100 and Ser180 each act as charge relay system in the active site. The Acyl-ester intermediate role is filled by Ser204.

As to quaternary structure, monomer.

The catalysed reaction is (R)-mandelamide + H2O = (R)-mandelate + NH4(+). Its activity is regulated as follows. Inhibited by 3,4-dichloroisocoumarin and PMSF. Hydrolyzes both the R- and the S-enantiomers of mandelamide, and phenylacetamide. Has lower activity on 3-phenylpropionaide and lactamide. Does not hydrolyze benzamide. Hydrolyzes esters and amides with little steric bulk. Preferentially hydrolyzes aromatic substrates. This Pseudomonas putida (Arthrobacter siderocapsulatus) protein is Mandelamide hydrolase.